An 892-amino-acid polypeptide reads, in one-letter code: Putative ubiquitin carboxyl-terminal hydrolase 11 (892 aa).

The region spanning 17–132 is the DUSP domain; sequence YTPEEERRIV…GGPPVPRKLI (116 aa). The tract at residues 69–89 is disordered; it reads EPSEVTRPGPIDNHDIIDSES. The USP domain maps to 301 to 880; it reads GGLQNLGNTC…AAYVLFYQRV (580 aa). Cysteine 310 (nucleophile) is an active-site residue. The tract at residues 636–660 is disordered; it reads NSGNENGHVPDESSRSILSRDTETE. The segment covering 643–657 has biased composition (basic and acidic residues); it reads HVPDESSRSILSRDT. Histidine 838 acts as the Proton acceptor in catalysis.

The protein belongs to the peptidase C19 family.

It carries out the reaction Thiol-dependent hydrolysis of ester, thioester, amide, peptide and isopeptide bonds formed by the C-terminal Gly of ubiquitin (a 76-residue protein attached to proteins as an intracellular targeting signal).. Functionally, recognizes and hydrolyzes the peptide bond at the C-terminal Gly of ubiquitin. Involved in the processing of poly-ubiquitin precursors as well as that of ubiquitinated proteins. The sequence is that of Putative ubiquitin carboxyl-terminal hydrolase 11 (UBP11) from Arabidopsis thaliana (Mouse-ear cress).